The chain runs to 148 residues: Leghemoglobin 29 (148 aa).

A Globin domain is found at 2–148 (EFTLRQEALV…LAVAIMKEMS (147 aa)). Nitrated tyrosine is present on Tyr-30. Ser-45 contacts heme b. Ser-45 is subject to Phosphoserine. An O2-binding site is contributed by His-63. His-95 and Lys-98 together coordinate heme b. A Nitrated tyrosine modification is found at Tyr-136.

It belongs to the plant globin family. In terms of assembly, monomer. Post-translationally, nitrated in effective nodules and particularly in hypoxic conditions; this mechanism may play a protective role in the symbiosis by buffering toxic peroxynitrite NO(2)(-). Nitration level decrease during nodule senescence. Phosphorylation at Ser-45 disrupts the molecular environment of its porphyrin ring oxygen binding pocket, thus leading to a reduced oxygen consumption and to the delivery of oxygen O(2) to symbiosomes. Accumulates in root nodules after inoculation by bacteria of the genus Rhizobium. Expressed in mycorrhizal roots in the presence of the mycorrhizal fungus Glomus fasciculatum.

The protein resides in the cytoplasm. It localises to the cytosol. Its subcellular location is the nucleus. Functionally, leghemoglobin that reversibly binds oxygen O(2) through a pentacoordinated heme iron. In root nodules, facilitates the diffusion of oxygen to the bacteroids while preventing the bacterial nitrogenase from being inactivated by buffering dioxygen, nitric oxide and carbon monoxide, and promoting the formation of reactive oxygen species (ROS, e.g. H(2)O(2)). This role is essential for symbiotic nitrogen fixation (SNF). In Vicia faba (Broad bean), this protein is Leghemoglobin 29.